The chain runs to 106 residues: Urease subunit beta (106 aa).

This sequence belongs to the urease beta subunit family. As to quaternary structure, heterotrimer of UreA (gamma), UreB (beta) and UreC (alpha) subunits. Three heterotrimers associate to form the active enzyme.

The protein localises to the cytoplasm. The enzyme catalyses urea + 2 H2O + H(+) = hydrogencarbonate + 2 NH4(+). It participates in nitrogen metabolism; urea degradation; CO(2) and NH(3) from urea (urease route): step 1/1. The sequence is that of Urease subunit beta from Prochlorococcus marinus (strain AS9601).